The chain runs to 79 residues: Dicentracin (79 aa).

An N-terminal signal peptide occupies residues 1–22 (MKCATLFLVLSMVVLMAEPGDA). The residue at position 44 (G44) is a Glycine amide. The propeptide occupies 47–79 (AQQDQQDQQYQQDQQDQQAEQYQRFNRERAAFD). A disordered region spans residues 48–67 (QQDQQDQQYQQDQQDQQAEQ).

Belongs to the pleurocidin family.

It localises to the secreted. The chain is Dicentracin from Dicentrarchus labrax (European seabass).